A 1757-amino-acid polypeptide reads, in one-letter code: Serine/threonine-protein kinase WNK3 (1757 aa).

The disordered stretch occupies residues Met-1–Arg-25. Ser-62 carries the phosphoserine modification. Residues Thr-66–Ala-82 are compositionally biased toward basic and acidic residues. Residues Thr-66–Asn-85 are disordered. One can recognise a Protein kinase domain in the interval Leu-146 to Phe-404. Residues Thr-226 to Met-229 and Lys-276 contribute to the ATP site. Asp-293 functions as the Proton acceptor in the catalytic mechanism. Phosphoserine; by autocatalysis is present on residues Ser-303 and Ser-307. An interaction with KLHL3 region spans residues Glu-536 to Val-546. Residue Thr-540 is modified to Phosphothreonine. Polar residues-rich tracts occupy residues Leu-551–Pro-570, Ser-578–Gln-604, and Ser-674–Gly-689. Disordered regions lie at residues Leu-551–Gln-604 and Ser-674–Glu-705. Ser-1039 carries the post-translational modification Phosphoserine. Positions Val-1404–Ser-1422 are enriched in polar residues. Disordered regions lie at residues Val-1404–Thr-1440, Ser-1479–Asp-1498, and Ala-1536–Ser-1574. Over residues Ser-1479 to Asp-1491 the composition is skewed to low complexity. Phosphoserine occurs at positions 1550 and 1553. Residues Arg-1555–Ser-1566 show a composition bias toward basic residues. Ser-1595 carries the post-translational modification Phosphoserine. Disordered stretches follow at residues His-1621–Thr-1650 and Pro-1734–Lys-1757. Positions Ser-1624–Lys-1637 are enriched in low complexity. Residues Glu-1641–Thr-1650 show a composition bias toward polar residues. Residues Pro-1742 to Lys-1757 are compositionally biased toward pro residues.

It belongs to the protein kinase superfamily. Ser/Thr protein kinase family. WNK subfamily. Interacts with WNK1 and WNK4. It depends on Mg(2+) as a cofactor. In terms of processing, autophosphorylated at Ser-303 and Ser-307, promoting its activity. Phosphorylation at Thr-540 prevents interaction with KLHL3 and subsequent ubiquitination and degradation by the BCR(KLHL3) complex. Ubiquitinated by the BCR(KLHL2) complex, leading to its degradation. Ubiquitinated by the BCR(KLHL3) complex, leading to its degradation. Expressed in pancreatic duct.

It is found in the cytoplasm. It carries out the reaction L-seryl-[protein] + ATP = O-phospho-L-seryl-[protein] + ADP + H(+). It catalyses the reaction L-threonyl-[protein] + ATP = O-phospho-L-threonyl-[protein] + ADP + H(+). With respect to regulation, activated in response to hyperosmotic stress: cell shrinkage promotes formation of a membraneless compartment that concentrates WNK3 with its substrates, OXSR1/OSR1 and STK39/SPAK. Activation requires autophosphorylation of Ser-307 and, to a lower extent, Ser-303. Autophosphorylation and subsequent activation is inhibited by increases in intracellular ionic strength: Cl(-) potently inhibits WNK3 kinase activity via direct binding. Also inhibited by K(+) ions. Kinase activity is inhibited by WNK4. In terms of biological role, serine/threonine-protein kinase component of the WNK3-SPAK/OSR1 kinase cascade, which plays an important role in the regulation of electrolyte homeostasis and regulatory volume increase in response to hyperosmotic stress. WNK3 mediates regulatory volume increase in response to hyperosmotic stress by acting as a molecular crowding sensor, which senses cell shrinkage and mediates formation of a membraneless compartment by undergoing liquid-liquid phase separation. The membraneless compartment concentrates WNK3 with its substrates, OXSR1/OSR1 and STK39/SPAK, promoting WNK3-dependent phosphorylation and activation of downstream kinases OXSR1/OSR1 and STK39/SPAK. Following activation, OXSR1/OSR1 and STK39/SPAK catalyze phosphorylation of ion cotransporters SLC12A1/NKCC2, SLC12A2/NKCC1, SLC12A3/NCC, SLC12A4/KCC1, SLC12A5/KCC2 or SLC12A6/KCC3, regulating their activity. Phosphorylation of Na-K-Cl cotransporters SLC12A2/NKCC1 and SLC12A2/NKCC1 promote their activation and ion influx; simultaneously, phosphorylation of K-Cl cotransporters SLC12A4/KCC1, SLC12A5/KCC2 and SLC12A6/KCC3 inhibits its activity, blocking ion efflux. Phosphorylates WNK4, possibly regulating the activity of SLC12A3/NCC. May also phosphorylate NEDD4L. Also acts as a scaffold protein independently of its protein kinase activity: negatively regulates cell membrane localization of various transporters and channels, such as KCNJ1 and SLC26A9. Increases Ca(2+) influx mediated by TRPV5 and TRPV6 by enhancing their membrane expression level via a kinase-dependent pathway. The protein is Serine/threonine-protein kinase WNK3 of Mus musculus (Mouse).